Reading from the N-terminus, the 429-residue chain is MEKQVIETVKAREIFDSRGNPTVEADVILSDGTLGRAEVPSGASTGEKEAVELRDGGDRLAGKGVLKAVNNVNTVINHALHGADPFNQAHIDQIMIDLDGTPNKARLGANAILGVSMATARAAANALQQPLYRYLGGTDLELPQTFHNVINGGEHADNGIDIQEFMITPVERTSFRDGFEKIVNTYHTLKKVIEDAGYTSGLGDEGGFAPDLKNSEEALQMLHDAIIKAGYTPGKEIAIAFDAAASYFYNRTTHNYDFEGKTYTPAALGDYYLQLLAKFPEIVSIEDPYGEEDWDNFASFTAAHGDQLQIVADDPVCTNPQLIRQAIQRGMANNILIKLNQIGTVTETLAAIRLARKNGYATMMSHRSGETGDTFVADFTVATNAAQLKAGAPARSERVEKYNQLLRIEEELGADGARLAHFPNNVMFD.

Gln-163 is a binding site for (2R)-2-phosphoglycerate. Glu-205 (proton donor) is an active-site residue. Mg(2+) contacts are provided by Asp-242, Glu-286, and Asp-313. Residues Lys-338, Arg-367, Ser-368, and Lys-389 each coordinate (2R)-2-phosphoglycerate. Lys-338 (proton acceptor) is an active-site residue.

The protein belongs to the enolase family. It depends on Mg(2+) as a cofactor.

The protein resides in the cytoplasm. It localises to the secreted. It is found in the cell surface. The enzyme catalyses (2R)-2-phosphoglycerate = phosphoenolpyruvate + H2O. The protein operates within carbohydrate degradation; glycolysis; pyruvate from D-glyceraldehyde 3-phosphate: step 4/5. Functionally, catalyzes the reversible conversion of 2-phosphoglycerate (2-PG) into phosphoenolpyruvate (PEP). It is essential for the degradation of carbohydrates via glycolysis. The chain is Enolase 2 from Lactiplantibacillus plantarum (strain ATCC BAA-793 / NCIMB 8826 / WCFS1) (Lactobacillus plantarum).